An 84-amino-acid polypeptide reads, in one-letter code: MKQIFIWLIKGYRMFISPLYPPTCRFRPTCSMYAIEAIERFGVFRGGWMAIRRILRCHPFHPGGYDPVPELGEHCCHHDSGNKG.

It belongs to the UPF0161 family.

It is found in the cell inner membrane. Its function is as follows. Could be involved in insertion of integral membrane proteins into the membrane. The sequence is that of Putative membrane protein insertion efficiency factor from Nostoc sp. (strain PCC 7120 / SAG 25.82 / UTEX 2576).